We begin with the raw amino-acid sequence, 433 residues long: Protein arginine N-methyltransferase 2 (433 aa).

Positions 1 to 27 are disordered; the sequence is MSTSGCSSEKSDFQDSTEGEEEEDTQS. A compositionally biased stretch (acidic residues) spans 15 to 26; the sequence is DSTEGEEEEDTQ. The SH3 domain occupies 30 to 89; it reads LCMREYVVIRDYMAADATQLSLCFGDKVLLLSAVTQDWWWVKHNGICGYVPASYLHDALN. One can recognise an SAM-dependent MTase PRMT-type domain in the interval 102–416; that stretch reads DEEYYGSYKT…MSVTLSWVIN (315 aa). S-adenosyl-L-methionine-binding residues include His-115, Arg-124, Gly-148, Glu-171, and Glu-200. Active-site residues include Glu-214 and Glu-223.

This sequence belongs to the class I-like SAM-binding methyltransferase superfamily. Protein arginine N-methyltransferase family. As to quaternary structure, interacts with ctnnb1.

It localises to the cytoplasm. The protein resides in the nucleus. The catalysed reaction is L-arginyl-[protein] + 2 S-adenosyl-L-methionine = N(omega),N(omega)-dimethyl-L-arginyl-[protein] + 2 S-adenosyl-L-homocysteine + 2 H(+). In terms of biological role, arginine methyltransferase that methylates the guanidino nitrogens of arginyl residues in proteins such as histones. Involved in growth regulation. Involved in embryonic dorsal development. The polypeptide is Protein arginine N-methyltransferase 2 (prmt2) (Xenopus tropicalis (Western clawed frog)).